The sequence spans 294 residues: NAD kinase (294 aa).

Aspartate 74 serves as the catalytic Proton acceptor. NAD(+)-binding positions include 74-75 (DG), 148-149 (NE), histidine 159, arginine 176, aspartate 178, 189-194 (TAYSLS), and glutamine 249.

This sequence belongs to the NAD kinase family. It depends on a divalent metal cation as a cofactor.

It localises to the cytoplasm. It catalyses the reaction NAD(+) + ATP = ADP + NADP(+) + H(+). Involved in the regulation of the intracellular balance of NAD and NADP, and is a key enzyme in the biosynthesis of NADP. Catalyzes specifically the phosphorylation on 2'-hydroxyl of the adenosine moiety of NAD to yield NADP. The polypeptide is NAD kinase (Vibrio campbellii (strain ATCC BAA-1116)).